We begin with the raw amino-acid sequence, 326 residues long: Flotillin-like protein FloA (326 aa).

2 helical membrane-spanning segments follow: residues 6-26 (IILF…GSSV) and 27-47 (SLWI…IVFM).

The protein belongs to the flotillin-like FloA family. Homooligomerizes.

The protein resides in the cell membrane. It localises to the membrane raft. Its function is as follows. Found in functional membrane microdomains (FMM) that may be equivalent to eukaryotic membrane rafts. FMMs are highly dynamic and increase in number as cells age. Flotillins are thought to be important factors in membrane fluidity. The protein is Flotillin-like protein FloA of Desulfosudis oleivorans (strain DSM 6200 / JCM 39069 / Hxd3) (Desulfococcus oleovorans).